The primary structure comprises 227 residues: Probable septum site-determining protein MinC (227 aa).

The protein belongs to the MinC family. As to quaternary structure, interacts with MinD and FtsZ.

Functionally, cell division inhibitor that blocks the formation of polar Z ring septums. Rapidly oscillates between the poles of the cell to destabilize FtsZ filaments that have formed before they mature into polar Z rings. Prevents FtsZ polymerization. The polypeptide is Probable septum site-determining protein MinC (Acetivibrio thermocellus (strain ATCC 27405 / DSM 1237 / JCM 9322 / NBRC 103400 / NCIMB 10682 / NRRL B-4536 / VPI 7372) (Clostridium thermocellum)).